Consider the following 431-residue polypeptide: MKIKKINNQKVQYFFKVSSKELETQLSSAYEKIKSKVEIKGFRKGHVPRKIFENHFGKNNLYSDALENIVQTKYQEILQKKDFESMGMPQVIDLNEKKLKDNQNFTFGLEFIVKPKVILKKYLGLEITKDELEVKDCEVEEKINSLLEKQATLESKTQNNSLELTDTAVFDFEGFVDEKPFEGGTAKNFSLKIGSGQFLPGFEDQMLGMKQGQNKDINITFPSDYHQKKLANKKVIFKVTLHQIKTKKIPQLTDNLVKLLKLANVSTVEELKNNTKKTLLDQKKHKEKENIKKQVIEQLVKNSELQIPQEIISQEKTHLQKEFEKQLKQQNLTLEQYKQYLGIGDEKMEKEFNQQAQKNLQYRLIIEQVAFQEKLTISKEKIEQQYKNLSNHYKVPVNQIKQNLPEKNLQHSLLMDEALDLVINKAVVVTK.

The PPIase FKBP-type domain occupies 165–250 (TDTAVFDFEG…LHQIKTKKIP (86 aa)).

This sequence belongs to the FKBP-type PPIase family. Tig subfamily.

It is found in the cytoplasm. It catalyses the reaction [protein]-peptidylproline (omega=180) = [protein]-peptidylproline (omega=0). Functionally, involved in protein export. Acts as a chaperone by maintaining the newly synthesized protein in an open conformation. Functions as a peptidyl-prolyl cis-trans isomerase. This is Trigger factor from Aster yellows witches'-broom phytoplasma (strain AYWB).